Consider the following 62-residue polypeptide: Photosystem II reaction center protein Z (62 aa).

2 helical membrane-spanning segments follow: residues 8–28 (FLIALVLFSLLMVIGVPVAYA) and 41–61 (YVGSAIWAILVVAVAILNFLV).

It belongs to the PsbZ family. In terms of assembly, PSII is composed of 1 copy each of membrane proteins PsbA, PsbB, PsbC, PsbD, PsbE, PsbF, PsbH, PsbI, PsbJ, PsbK, PsbL, PsbM, PsbT, PsbX, PsbY, PsbZ, Psb30/Ycf12, peripheral proteins PsbO, CyanoQ (PsbQ), PsbU, PsbV and a large number of cofactors. It forms dimeric complexes.

It is found in the cellular thylakoid membrane. May control the interaction of photosystem II (PSII) cores with the light-harvesting antenna, regulates electron flow through the 2 photosystem reaction centers. PSII is a light-driven water plastoquinone oxidoreductase, using light energy to abstract electrons from H(2)O, generating a proton gradient subsequently used for ATP formation. The protein is Photosystem II reaction center protein Z of Microcystis aeruginosa (strain NIES-843 / IAM M-2473).